The primary structure comprises 478 residues: Putative sulfate transporter YbaR (478 aa).

The next 12 membrane-spanning stretches (helical) occupy residues 19–39 (ILAG…FSII), 42–62 (VDPM…SIFG), 65–85 (PGMI…LVAD), 87–107 (GLQY…ILGI), 121–141 (VMIG…LPQF), 143–163 (GASW…YVLP), 168–188 (AVPS…TFHV), 220–240 (IIFP…LLTA), 259–279 (GQGI…CAMI), 295–315 (SAFV…HVVV), 345–365 (APLT…VTDD), and 366–386 (LSKG…AKIS). The 90-residue stretch at 389–478 (KIVSHAEDQK…ASKSLMKQMA (90 aa)) folds into the STAS domain.

This sequence belongs to the SLC26A/SulP transporter (TC 2.A.53) family.

Its subcellular location is the cell membrane. This is Putative sulfate transporter YbaR (ybaR) from Bacillus subtilis (strain 168).